We begin with the raw amino-acid sequence, 321 residues long: Glutathione synthetase (321 aa).

An ATP-grasp domain is found at 125-311 (EKLFTGWFPH…IAGQFIAFLE (187 aa)). 151 to 208 (FIREQKEVVIKPLGAMAGESIFYLTVNDPNIPVVIETMTANGHQLVMAQRFIPEVKSG) serves as a coordination point for ATP. Glu-282 and Asn-284 together coordinate Mg(2+).

It belongs to the prokaryotic GSH synthase family. Requires Mg(2+) as cofactor. It depends on Mn(2+) as a cofactor.

The catalysed reaction is gamma-L-glutamyl-L-cysteine + glycine + ATP = glutathione + ADP + phosphate + H(+). It functions in the pathway sulfur metabolism; glutathione biosynthesis; glutathione from L-cysteine and L-glutamate: step 2/2. The sequence is that of Glutathione synthetase from Coxiella burnetii (strain RSA 493 / Nine Mile phase I).